The sequence spans 305 residues: Tyrosine recombinase XerC (305 aa).

Residues 4–95 (TSIQALINKW…AVKNFYRFLE (92 aa)) enclose the Core-binding (CB) domain. Positions 116-298 (LLPKALSEDD…SIKHLEAVYT (183 aa)) constitute a Tyr recombinase domain. Catalysis depends on residues Arg159, Lys182, His250, Arg253, and His276. Tyr285 serves as the catalytic O-(3'-phospho-DNA)-tyrosine intermediate.

It belongs to the 'phage' integrase family. XerC subfamily. In terms of assembly, forms a cyclic heterotetrameric complex composed of two molecules of XerC and two molecules of XerD.

Its subcellular location is the cytoplasm. Site-specific tyrosine recombinase, which acts by catalyzing the cutting and rejoining of the recombining DNA molecules. The XerC-XerD complex is essential to convert dimers of the bacterial chromosome into monomers to permit their segregation at cell division. It also contributes to the segregational stability of plasmids. This chain is Tyrosine recombinase XerC, found in Rickettsia peacockii (strain Rustic).